A 191-amino-acid polypeptide reads, in one-letter code: Holliday junction branch migration complex subunit RuvA (191 aa).

A domain I region spans residues 1 to 63; sequence MIRYLRGLVL…EEGLSLYGFP (63 aa). A domain II region spans residues 64–136; it reads DEENLALFEL…LKGKVPPHLL (73 aa). Positions 136-140 are flexible linker; it reads LAGEK. The interval 141 to 191 is domain III; the sequence is VESEAAEEAVMALAALGFKEAQARAVVLDLLAQNPKARAQDLIKEALKRLR.

It belongs to the RuvA family. Homotetramer. Forms an RuvA(8)-RuvB(12)-Holliday junction (HJ) complex. HJ DNA is sandwiched between 2 RuvA tetramers; dsDNA enters through RuvA and exits via RuvB. An RuvB hexamer assembles on each DNA strand where it exits the tetramer. Each RuvB hexamer is contacted by two RuvA subunits (via domain III) on 2 adjacent RuvB subunits; this complex drives branch migration. In the full resolvosome a probable DNA-RuvA(4)-RuvB(12)-RuvC(2) complex forms which resolves the HJ.

It localises to the cytoplasm. In terms of biological role, the RuvA-RuvB-RuvC complex processes Holliday junction (HJ) DNA during genetic recombination and DNA repair, while the RuvA-RuvB complex plays an important role in the rescue of blocked DNA replication forks via replication fork reversal (RFR). RuvA specifically binds to HJ cruciform DNA, conferring on it an open structure. The RuvB hexamer acts as an ATP-dependent pump, pulling dsDNA into and through the RuvAB complex. HJ branch migration allows RuvC to scan DNA until it finds its consensus sequence, where it cleaves and resolves the cruciform DNA. This chain is Holliday junction branch migration complex subunit RuvA, found in Thermus thermophilus (strain ATCC BAA-163 / DSM 7039 / HB27).